Reading from the N-terminus, the 193-residue chain is Ion-translocating oxidoreductase complex subunit B (193 aa).

The interval 1-26 (MSTMLIAVILLTLLALFFGVLLGFAA) is hydrophobic. The region spanning 32–90 (EGNPIVDELEAILPQTQCGQCGYPGCRPYAEAIANGDKVNKCPPGGTATMEKLASLMGV) is the 4Fe-4S domain. 12 residues coordinate [4Fe-4S] cluster: cysteine 49, cysteine 52, cysteine 57, cysteine 73, cysteine 114, cysteine 117, cysteine 120, cysteine 124, cysteine 144, cysteine 147, cysteine 150, and cysteine 154. 4Fe-4S ferredoxin-type domains lie at 105-134 (KVAY…GAGK) and 136-164 (MHTV…MIPV).

It belongs to the 4Fe4S bacterial-type ferredoxin family. RnfB subfamily. In terms of assembly, the complex is composed of six subunits: RnfA, RnfB, RnfC, RnfD, RnfE and RnfG. [4Fe-4S] cluster serves as cofactor.

It localises to the cell inner membrane. Its function is as follows. Part of a membrane-bound complex that couples electron transfer with translocation of ions across the membrane. The polypeptide is Ion-translocating oxidoreductase complex subunit B (Shewanella sp. (strain MR-7)).